Reading from the N-terminus, the 639-residue chain is tRNA (uracil(54)-C(5))-methyltransferase (639 aa).

The segment at 78 to 113 (VPPTMKHTVDNKRLSSPLTDSGNRRTKKPKLRKYKA) is disordered. Ser92 and Ser93 each carry phosphoserine. Residues 101–113 (RRTKKPKLRKYKA) show a composition bias toward basic residues. A TRAM domain is found at 163–228 (LQYHREVKNV…PYYVESDLLD (66 aa)). Gln461, Tyr496, Glu517, and Asp564 together coordinate S-adenosyl-L-methionine. Cys591 serves as the catalytic Nucleophile. Glu631 serves as the catalytic Proton acceptor.

This sequence belongs to the class I-like SAM-binding methyltransferase superfamily. RNA M5U methyltransferase family.

The enzyme catalyses uridine(54) in tRNA + S-adenosyl-L-methionine = 5-methyluridine(54) in tRNA + S-adenosyl-L-homocysteine + H(+). Functionally, catalyzes the formation of 5-methyl-uridine at position 54 (m5U54) in all tRNA. May also have a role in tRNA stabilization or maturation. The sequence is that of tRNA (uracil(54)-C(5))-methyltransferase (TRM2) from Saccharomyces cerevisiae (strain ATCC 204508 / S288c) (Baker's yeast).